The chain runs to 797 residues: MSTRTPLPTVNERDTENHISHGDGRQEVTSRTGRSGARCRNSIASCADEQPHIGNYRLLKTIGKGNFAKVKLARHILTGREVAIKIIDKTQLNPTSLQKLFREVRIMKILNHPNIVKLFEVIETEKTLYLIMEYASGGEVFDYLVAHGRMKEKEARAKFRQIVSAVQYCHQKRIVHRDLKAENLLLDADMNIKITDFGFSNEFTVGSKLDTFCGSPPYAAPELFQGKKYDGPEVDVWSLGVILYTLVSGSLPFDGQNLKELRERVLRGKYRIPFYMSTDCENLLKRFLVLNPVKRGTLEQIMKDRWINAGHEEEELKPFVEPELDISDQKRIDIMVGMGYSQEEIQESLSKMKYDEITATYLLLGRKSAELDASDSSSSSNLSLAKVRPSSDLSNSTGQSPHHKGQRSVSSSQKQRRYSDHAGPAIPSVVAYPKRSQTSTADSDLKEDGVPSRKSGSSAVGGKGIAPASPMLGNASNPNKADIPERKKSPAVPSSNAASGGMTRRNTYVCSERCAADRHSVIQNGKESSLTEVFAYAASPASLCATSTCRLRHQRSMSVSASGHPKMVLPPIDSEGDTFKAITTPDQRTPVASTHSISSATTPDRIRFPRGTASRSTFHGQPRERRTATYNGPPASPSLSHEATPLSQTRSRGSTNLFSKLTSKLTRRLPTEYERNGRYEGSSRNVSSEQKDENREAKPRSLRFTWSMKTTSSMDPSDMMREIRKVLDANTCDYEQRERFLLFCVHGDGHAESLVQWEMEVCKLPRLSLNGVRFKRISGTSIAFKNIASKIANELKL.

Residues 1 to 35 form a disordered region; it reads MSTRTPLPTVNERDTENHISHGDGRQEVTSRTGRS. Over residues 11–28 the composition is skewed to basic and acidic residues; that stretch reads NERDTENHISHGDGRQEV. Phosphoserine is present on Ser-42. The region spanning 56–307 is the Protein kinase domain; it reads YRLLKTIGKG…LEQIMKDRWI (252 aa). ATP contacts are provided by residues 62-70 and Lys-85; that span reads IGKGNFAKV. Residue Asp-178 is the Proton acceptor of the active site. Thr-211 bears the Phosphothreonine; by LKB1 mark. Positions 326–365 constitute a UBA domain; that stretch reads ISDQKRIDIMVGMGYSQEEIQESLSKMKYDEITATYLLLG. A phosphoserine mark is found at Ser-368, Ser-374, Ser-376, Ser-380, Ser-383, Ser-400, Ser-419, and Ser-469. Disordered stretches follow at residues 372–504 and 585–701; these read DASD…GMTR and PDQR…KPRS. Residues 374–385 show a composition bias toward low complexity; that stretch reads SDSSSSSNLSLA. The segment covering 391-400 has biased composition (polar residues); that stretch reads SDLSNSTGQS. Polar residues-rich tracts occupy residues 492–504 and 585–602; these read VPSS…GMTR and PDQR…SATT. A phosphoserine mark is found at Ser-593 and Ser-596. The residue at position 602 (Thr-602) is a Phosphothreonine. Thr-617 carries the phosphothreonine; by PKC/PRKCZ modification. Ser-636, Ser-651, and Ser-654 each carry phosphoserine. Residues 637-664 show a composition bias toward polar residues; that stretch reads PSLSHEATPLSQTRSRGSTNLFSKLTSK. Residues 669 to 678 are compositionally biased toward basic and acidic residues; that stretch reads LPTEYERNGR. Phosphoserine is present on Ser-687. The span at 689-699 shows a compositional bias: basic and acidic residues; it reads EQKDENREAKP. The region spanning 748–797 is the KA1 domain; the sequence is DGHAESLVQWEMEVCKLPRLSLNGVRFKRISGTSIAFKNIASKIANELKL.

It belongs to the protein kinase superfamily. CAMK Ser/Thr protein kinase family. SNF1 subfamily. In terms of assembly, interacts with MAPT/TAU. Interacts with DLG5 (via coiled-coil domain). Interacts with STK3/MST2 and STK4/MST1 in the presence of DLG5. Interacts with YWHAB, YWHAG, YWHAQ and YWHAZ. Interacts with PKP2 (via N-terminus). Interacts with CDC25C. Interacts with KSR1. Phosphorylated at Thr-211 by STK11/LKB1 in complex with STE20-related adapter-alpha (STRADA) pseudo kinase and CAB39. Phosphorylation at Thr-617 by PRKCZ/aPKC inhibits the kinase activity.

It is found in the cell membrane. The protein localises to the cell projection. Its subcellular location is the dendrite. The protein resides in the cytoplasm. It catalyses the reaction L-seryl-[protein] + ATP = O-phospho-L-seryl-[protein] + ADP + H(+). The catalysed reaction is L-threonyl-[protein] + ATP = O-phospho-L-threonyl-[protein] + ADP + H(+). Its activity is regulated as follows. Activated by phosphorylation on Thr-211. Inhibited by phosphorylation on Thr-617. Its function is as follows. Serine/threonine-protein kinase. Involved in the specific phosphorylation of microtubule-associated proteins for MAP2 and MAP4. Phosphorylates the microtubule-associated protein MAPT/TAU. Phosphorylates CDC25C on 'Ser-216'. Regulates localization and activity of some histone deacetylases by mediating phosphorylation of HDAC7, promoting subsequent interaction between HDAC7 and 14-3-3 and export from the nucleus. Regulates localization and activity of MITF by mediating its phosphorylation, promoting subsequent interaction between MITF and 14-3-3 and retention in the cytosol. Negatively regulates the Hippo signaling pathway and antagonizes the phosphorylation of LATS1. Cooperates with DLG5 to inhibit the kinase activity of STK3/MST2 toward LATS1. Phosphorylates PKP2 and KSR1. This chain is MAP/microtubule affinity-regulating kinase 3 (Mark3), found in Rattus norvegicus (Rat).